A 577-amino-acid polypeptide reads, in one-letter code: Protein downstream neighbor of son homolog (577 aa).

Disordered regions lie at residues 1-67 and 328-382; these read MAEL…KRRN and FTQP…LEEM. Acidic residues predominate over residues 362–375; the sequence is ETDEVSDESDEDES.

Belongs to the DONSON family. As to quaternary structure, component of the replisome complex.

The protein resides in the nucleus. Its function is as follows. Replisome component that maintains genome stability by protecting stalled or damaged replication forks. After the induction of replication stress, required for the stabilization of stalled replication forks, the efficient activation of the intra-S-phase and G/2M cell-cycle checkpoints and the maintenance of genome stability. This Xenopus tropicalis (Western clawed frog) protein is Protein downstream neighbor of son homolog.